A 297-amino-acid polypeptide reads, in one-letter code: Ribosomal RNA small subunit methyltransferase A (297 aa).

Residues asparagine 31, leucine 33, glycine 58, glutamate 79, aspartate 104, and asparagine 129 each coordinate S-adenosyl-L-methionine.

Belongs to the class I-like SAM-binding methyltransferase superfamily. rRNA adenine N(6)-methyltransferase family. RsmA subfamily.

Its subcellular location is the cytoplasm. It carries out the reaction adenosine(1518)/adenosine(1519) in 16S rRNA + 4 S-adenosyl-L-methionine = N(6)-dimethyladenosine(1518)/N(6)-dimethyladenosine(1519) in 16S rRNA + 4 S-adenosyl-L-homocysteine + 4 H(+). Functionally, specifically dimethylates two adjacent adenosines (A1518 and A1519) in the loop of a conserved hairpin near the 3'-end of 16S rRNA in the 30S particle. May play a critical role in biogenesis of 30S subunits. This Staphylococcus aureus (strain MRSA252) protein is Ribosomal RNA small subunit methyltransferase A.